The following is a 227-amino-acid chain: Isopentenyl-diphosphate Delta-isomerase 1 (227 aa).

Residue lysine 36 participates in substrate binding. Mg(2+)-binding residues include histidine 40 and histidine 51. One can recognise a Nudix hydrolase domain in the interval 49–199; that stretch reads LLHRAFSVFL…EIKLTPWFKI (151 aa). Positions 70 and 74 each coordinate substrate. Cysteine 86 is an active-site residue. Substrate is bound at residue serine 87. Glutamate 146 and glutamate 148 together coordinate Mg(2+). The active site involves glutamate 148. N6-acetyllysine is present on lysine 176. The Microbody targeting signal motif lies at 225 to 227; the sequence is HRL.

It belongs to the IPP isomerase type 1 family. Monomer. Mg(2+) serves as cofactor.

It localises to the peroxisome. It carries out the reaction isopentenyl diphosphate = dimethylallyl diphosphate. Its pathway is isoprenoid biosynthesis; dimethylallyl diphosphate biosynthesis; dimethylallyl diphosphate from isopentenyl diphosphate: step 1/1. Catalyzes the 1,3-allylic rearrangement of the homoallylic substrate isopentenyl (IPP) to its highly electrophilic allylic isomer, dimethylallyl diphosphate (DMAPP). The sequence is that of Isopentenyl-diphosphate Delta-isomerase 1 (Idi1) from Mus musculus (Mouse).